Consider the following 565-residue polypeptide: Proline--tRNA ligase (565 aa).

The protein belongs to the class-II aminoacyl-tRNA synthetase family. ProS type 1 subfamily. As to quaternary structure, homodimer.

The protein localises to the cytoplasm. The enzyme catalyses tRNA(Pro) + L-proline + ATP = L-prolyl-tRNA(Pro) + AMP + diphosphate. Its function is as follows. Catalyzes the attachment of proline to tRNA(Pro) in a two-step reaction: proline is first activated by ATP to form Pro-AMP and then transferred to the acceptor end of tRNA(Pro). As ProRS can inadvertently accommodate and process non-cognate amino acids such as alanine and cysteine, to avoid such errors it has two additional distinct editing activities against alanine. One activity is designated as 'pretransfer' editing and involves the tRNA(Pro)-independent hydrolysis of activated Ala-AMP. The other activity is designated 'posttransfer' editing and involves deacylation of mischarged Ala-tRNA(Pro). The misacylated Cys-tRNA(Pro) is not edited by ProRS. This is Proline--tRNA ligase from Bacillus pumilus (strain SAFR-032).